A 759-amino-acid chain; its full sequence is uncharacterized protein (759 aa).

2 disordered regions span residues 269–328 (SQRV…GEEP) and 406–759 (LPLR…AQTA). Over residues 289-299 (AGGKEEAERGG) the composition is skewed to basic and acidic residues. A compositionally biased stretch (low complexity) spans 406–415 (LPLRPPSGSG). The segment covering 417–430 (AARKPGYEKEEGRG) has biased composition (basic and acidic residues). A compositionally biased stretch (low complexity) spans 431–444 (RATTASATAATSPR). Basic and acidic residues-rich tracts occupy residues 469–518 (PESE…RGEH) and 525–545 (DSGR…EKGT). The segment covering 585 to 599 (WVPPPHLLFPSPLPS) has biased composition (pro residues). Low complexity predominate over residues 659–680 (SLSSLSSSSSSSSSSSPSYSPS). Residues 681–690 (PLSPPSPVSP) are compositionally biased toward pro residues. Low complexity-rich tracts occupy residues 691 to 704 (SSPR…IRSP) and 728 to 746 (PPFS…PSAP).

This is an uncharacterized protein from Human herpesvirus 6B (strain Z29) (HHV-6 variant B).